Here is a 343-residue protein sequence, read N- to C-terminus: D-alanine--D-alanine ligase (343 aa).

The region spanning 132–337 (KNLFSYHKIP…YPDLIDKLIE (206 aa)) is the ATP-grasp domain. ATP is bound at residue 165-220 (DRFLGWPCFVKPANMGSSIGVSKVHSPGEVKKALEKGFYYDRKLIFEEFVEGREIE). Residues Asp-291, Glu-304, and Asn-306 each contribute to the Mg(2+) site.

Belongs to the D-alanine--D-alanine ligase family. It depends on Mg(2+) as a cofactor. The cofactor is Mn(2+).

The protein resides in the cytoplasm. The catalysed reaction is 2 D-alanine + ATP = D-alanyl-D-alanine + ADP + phosphate + H(+). The protein operates within cell wall biogenesis; peptidoglycan biosynthesis. Functionally, cell wall formation. In Halothermothrix orenii (strain H 168 / OCM 544 / DSM 9562), this protein is D-alanine--D-alanine ligase.